The primary structure comprises 711 residues: Polyribonucleotide nucleotidyltransferase (711 aa).

Positions 491 and 497 each coordinate Mg(2+). The region spanning Pro559–Ile618 is the KH domain. The S1 motif domain maps to Gly628–Lys696.

It belongs to the polyribonucleotide nucleotidyltransferase family. It depends on Mg(2+) as a cofactor.

Its subcellular location is the cytoplasm. It catalyses the reaction RNA(n+1) + phosphate = RNA(n) + a ribonucleoside 5'-diphosphate. Its function is as follows. Involved in mRNA degradation. Catalyzes the phosphorolysis of single-stranded polyribonucleotides processively in the 3'- to 5'-direction. This Janthinobacterium sp. (strain Marseille) (Minibacterium massiliensis) protein is Polyribonucleotide nucleotidyltransferase.